The chain runs to 462 residues: MLDINAFLVEKGGDPEIIKASQKKRGDSVELVDEIIAEYKEWVKLRFDLDEHNKKLNSVQKEIGKRFKAKEDAKDLIAEKEKLSNEKKEIIEKEAEADKNLRSKINQVGNIVHESVVDSQDEENNELVRTWTPENYKKPEQIAAATGAPAKLSHHEVLLRLDGYDPERGVRIVGHRGYFLRNYGVFLNQALINYGLSFLSSKGYVPLQAPVMMNKEVMAKTAQLSQFDEELYKVIDGEDEKYLIATSEQPISAYHAGEWFESPAEQLPVRYAGYSSCFRREAGSHGKDAWGIFRVHAFEKIEQFVLTEPEKSWEEFDRMIGCSEEFYQSLGLPYRVVGIVSGELNNAAAKKYDLEAWFPFQQEYKELVSCSNCTDYQSRNLEIRCGIKQQNQQEKKYVHCLNSTLSATERTICCILENYQKEDGLVIPEVLRKYIPGEPEFIPYIKELPKNTTSVKKAKGKN.

Position 246 to 248 (246 to 248) interacts with L-serine; it reads TSE. ATP contacts are provided by residues 279 to 281 and Val295; that span reads RRE. Glu302 provides a ligand contact to L-serine. 366–369 serves as a coordination point for ATP; that stretch reads ELVS. Position 404 (Thr404) interacts with L-serine.

This sequence belongs to the class-II aminoacyl-tRNA synthetase family. Type-1 seryl-tRNA synthetase subfamily. As to quaternary structure, homodimer. The tRNA molecule binds across the dimer.

The protein localises to the cytoplasm. It is found in the cytosol. It carries out the reaction tRNA(Ser) + L-serine + ATP = L-seryl-tRNA(Ser) + AMP + diphosphate + H(+). Its function is as follows. Catalyzes the attachment of serine to tRNA(Ser) in a two-step reaction: serine is first activated by ATP to form Ser-AMP and then transferred to the acceptor end of tRNA(Ser). In Candida albicans (strain SC5314 / ATCC MYA-2876) (Yeast), this protein is Serine--tRNA ligase, cytoplasmic (SES1).